A 599-amino-acid polypeptide reads, in one-letter code: Endo-1,4-beta-xylanase B (599 aa).

The signal sequence occupies residues 1–37; it reads MTISASDYRHPGNFLKRTTALLCVGTALTALAFNASA. One can recognise a CBM2 domain in the interval 38-136; sequence ACTYTIDSEW…TVTGAACNSA (99 aa). Cysteines 39 and 133 form a disulfide. The region spanning 163-289 is the CBM6 domain; the sequence is LLQEAQAGFC…LPNIDSLSVV (127 aa). The region spanning 315-595 is the GH10 domain; that stretch reads SSSAASAKKF…RPAMTWLINN (281 aa). The active-site Proton donor is the E431. E530 acts as the Nucleophile in catalysis.

Belongs to the glycosyl hydrolase 10 (cellulase F) family.

The catalysed reaction is Endohydrolysis of (1-&gt;4)-beta-D-xylosidic linkages in xylans.. It participates in glycan metabolism; hemicellulose degradation. Functionally, xylanase B contributes to hydrolyze hemicellulose, the major component of plant cell-walls. The sequence is that of Endo-1,4-beta-xylanase B (xynB) from Cellvibrio japonicus (strain Ueda107) (Pseudomonas fluorescens subsp. cellulosa).